The following is a 556-amino-acid chain: 2-isopropylmalate synthase (556 aa).

Residues 33 to 307 (PIWCSSDLRD…HPQLDFSDID (275 aa)) form the Pyruvate carboxyltransferase domain. Positions 42, 246, 248, and 282 each coordinate Mg(2+). The interval 439 to 556 (ATSPYALASH…AVTQAEAKAA (118 aa)) is regulatory domain.

The protein belongs to the alpha-IPM synthase/homocitrate synthase family. LeuA type 2 subfamily. As to quaternary structure, homodimer. Mg(2+) is required as a cofactor.

It localises to the cytoplasm. It carries out the reaction 3-methyl-2-oxobutanoate + acetyl-CoA + H2O = (2S)-2-isopropylmalate + CoA + H(+). The protein operates within amino-acid biosynthesis; L-leucine biosynthesis; L-leucine from 3-methyl-2-oxobutanoate: step 1/4. In terms of biological role, catalyzes the condensation of the acetyl group of acetyl-CoA with 3-methyl-2-oxobutanoate (2-ketoisovalerate) to form 3-carboxy-3-hydroxy-4-methylpentanoate (2-isopropylmalate). The protein is 2-isopropylmalate synthase of Pseudomonas paraeruginosa (strain DSM 24068 / PA7) (Pseudomonas aeruginosa (strain PA7)).